The chain runs to 506 residues: Maturase K (506 aa).

The protein belongs to the intron maturase 2 family. MatK subfamily.

It localises to the plastid. The protein resides in the chloroplast. Its function is as follows. Usually encoded in the trnK tRNA gene intron. Probably assists in splicing its own and other chloroplast group II introns. The chain is Maturase K from Trifolium hybridum (Alsike clover).